Reading from the N-terminus, the 185-residue chain is Probable chorismate pyruvate-lyase 2 (185 aa).

Substrate is bound by residues R80, L118, and E170.

It belongs to the UbiC family.

It localises to the cytoplasm. It catalyses the reaction chorismate = 4-hydroxybenzoate + pyruvate. Its pathway is cofactor biosynthesis; ubiquinone biosynthesis. Functionally, removes the pyruvyl group from chorismate, with concomitant aromatization of the ring, to provide 4-hydroxybenzoate (4HB) for the ubiquinone pathway. This is Probable chorismate pyruvate-lyase 2 from Pseudomonas entomophila (strain L48).